The sequence spans 275 residues: Large ribosomal subunit protein uL2c (275 aa).

Positions 225-256 (AMNAVDHPHGGGEGRSPIGRSQPSTPWGRPAL) are disordered.

The protein belongs to the universal ribosomal protein uL2 family. As to quaternary structure, part of the 50S ribosomal subunit.

It localises to the plastid. The protein resides in the chloroplast. The polypeptide is Large ribosomal subunit protein uL2c (rpl2) (Cyanidium caldarium (Red alga)).